The following is a 485-amino-acid chain: Glutamyl-tRNA(Gln) amidotransferase subunit A (485 aa).

Residues Lys-74 and Ser-149 each act as charge relay system in the active site. Ser-173 acts as the Acyl-ester intermediate in catalysis.

This sequence belongs to the amidase family. GatA subfamily. Heterotrimer of A, B and C subunits.

It catalyses the reaction L-glutamyl-tRNA(Gln) + L-glutamine + ATP + H2O = L-glutaminyl-tRNA(Gln) + L-glutamate + ADP + phosphate + H(+). Functionally, allows the formation of correctly charged Gln-tRNA(Gln) through the transamidation of misacylated Glu-tRNA(Gln) in organisms which lack glutaminyl-tRNA synthetase. The reaction takes place in the presence of glutamine and ATP through an activated gamma-phospho-Glu-tRNA(Gln). The chain is Glutamyl-tRNA(Gln) amidotransferase subunit A from Herminiimonas arsenicoxydans.